A 446-amino-acid polypeptide reads, in one-letter code: MVLNSSDLGPSRCDIRDLPAPSSTNDQGKTELARKKKVKRSNTEIEADASSSDNSCFVALVTASNLRKDALYLPQDLTSSVGLERKYREIVVTDERERRSWALDLRFNKSSDTFYISRGWRSFCDENGKKPGGVFVFKLVGNRETPVLSFCSTESINDGTQGHKNNKYNCMELKSKKKRMRCRDSTSPSQNRFMTLTLTHDNLIKSRRYLPLSFTRDNGLDKPGMIFLLGKTGRKWEANLLREASGRIVLTGKGWKEFAMANGLKSGELFTLEAILEKGTPMLSLVNTQSTNYRSQQGECSRDSEKESSICAEPSRGNKKWKATNNRKERRDSSSAIQNRYVTLTLTPEDVRACTLILPSQFMKANGINKLGKKTLLGQNRKKWFAYLLSKSGFVALGSGWKGFCEANGVKTGESFNLEYIDEQDTTPVFKFCSNSVEYVKFTSLP.

A disordered region spans residues Met-1 to Glu-46. DNA-binding regions (TF-B3) lie at residues Cys-56 to Thr-153 and Phe-193 to Gln-289. Positions Ser-295–Ser-334 are disordered. Positions Tyr-341 to Asn-435 form a DNA-binding region, TF-B3 3.

It localises to the nucleus. The sequence is that of B3 domain-containing protein REM12 (REM12) from Arabidopsis thaliana (Mouse-ear cress).